A 138-amino-acid chain; its full sequence is Putative pre-16S rRNA nuclease (138 aa).

The protein belongs to the YqgF nuclease family.

It localises to the cytoplasm. Its function is as follows. Could be a nuclease involved in processing of the 5'-end of pre-16S rRNA. The sequence is that of Putative pre-16S rRNA nuclease from Haemophilus ducreyi (strain 35000HP / ATCC 700724).